Reading from the N-terminus, the 193-residue chain is Segregation and condensation protein B (193 aa).

This sequence belongs to the ScpB family. Homodimer. Homodimerization may be required to stabilize the binding of ScpA to the Smc head domains. Component of a cohesin-like complex composed of ScpA, ScpB and the Smc homodimer, in which ScpA and ScpB bind to the head domain of Smc. The presence of the three proteins is required for the association of the complex with DNA.

The protein localises to the cytoplasm. Participates in chromosomal partition during cell division. May act via the formation of a condensin-like complex containing Smc and ScpA that pull DNA away from mid-cell into both cell halves. This chain is Segregation and condensation protein B, found in Streptococcus thermophilus (strain ATCC BAA-250 / LMG 18311).